A 418-amino-acid chain; its full sequence is ORC1-type DNA replication protein 2 (418 aa).

Residues 72–76 (TGKTV), tyrosine 218, and arginine 230 each bind ATP.

Belongs to the CDC6/cdc18 family.

Involved in regulation of DNA replication. This is ORC1-type DNA replication protein 2 (cdc6-2) from Sulfurisphaera tokodaii (strain DSM 16993 / JCM 10545 / NBRC 100140 / 7) (Sulfolobus tokodaii).